The following is a 233-amino-acid chain: Putative glutathione peroxidase 7, chloroplastic (233 aa).

The transit peptide at 1 to 69 (MAFSYASFST…KSKNFSVYAR (69 aa)) directs the protein to the chloroplast. Residue Cys-108 is part of the active site.

Belongs to the glutathione peroxidase family.

Its subcellular location is the plastid. It localises to the chloroplast. The catalysed reaction is 2 glutathione + H2O2 = glutathione disulfide + 2 H2O. May constitute a glutathione peroxidase-like protective system against oxidative stresses. This is Putative glutathione peroxidase 7, chloroplastic (GPX7) from Arabidopsis thaliana (Mouse-ear cress).